Here is a 183-residue protein sequence, read N- to C-terminus: ATP-dependent protease subunit HslV (183 aa).

Thr-2 is an active-site residue. Residues Gly-157, Cys-160, and Thr-163 each contribute to the Na(+) site.

Belongs to the peptidase T1B family. HslV subfamily. As to quaternary structure, a double ring-shaped homohexamer of HslV is capped on each side by a ring-shaped HslU homohexamer. The assembly of the HslU/HslV complex is dependent on binding of ATP.

The protein resides in the cytoplasm. It carries out the reaction ATP-dependent cleavage of peptide bonds with broad specificity.. Allosterically activated by HslU binding. Functionally, protease subunit of a proteasome-like degradation complex believed to be a general protein degrading machinery. The polypeptide is ATP-dependent protease subunit HslV (Vibrio campbellii (strain ATCC BAA-1116)).